Reading from the N-terminus, the 54-residue chain is Large ribosomal subunit protein bL33 (54 aa).

This sequence belongs to the bacterial ribosomal protein bL33 family.

In Rhodopirellula baltica (strain DSM 10527 / NCIMB 13988 / SH1), this protein is Large ribosomal subunit protein bL33.